A 346-amino-acid chain; its full sequence is Isopentenyl-diphosphate delta-isomerase (346 aa).

A substrate-binding site is contributed by Arg9–Lys10. FMN-binding positions include Ser67, Ser68–Thr70, Ser98, and Asn127. Residue Ser98–Arg100 coordinates substrate. Gln162 contacts substrate. Residue Glu163 coordinates Mg(2+). Residues Lys194, Thr224, Gly274–Arg276, and Ala295–Ala296 each bind FMN.

The protein belongs to the IPP isomerase type 2 family. As to quaternary structure, homooctamer. Dimer of tetramers. It depends on FMN as a cofactor. The cofactor is NADPH. Requires Mg(2+) as cofactor.

The protein localises to the cytoplasm. It catalyses the reaction isopentenyl diphosphate = dimethylallyl diphosphate. Involved in the biosynthesis of isoprenoids. Catalyzes the 1,3-allylic rearrangement of the homoallylic substrate isopentenyl (IPP) to its allylic isomer, dimethylallyl diphosphate (DMAPP). This is Isopentenyl-diphosphate delta-isomerase from Stutzerimonas stutzeri (strain A1501) (Pseudomonas stutzeri).